The chain runs to 155 residues: Ribosome maturation factor RimP (155 aa).

The protein belongs to the RimP family.

The protein localises to the cytoplasm. In terms of biological role, required for maturation of 30S ribosomal subunits. This Staphylococcus aureus (strain JH9) protein is Ribosome maturation factor RimP.